Reading from the N-terminus, the 156-residue chain is Ribonuclease H (156 aa).

The RNase H type-1 domain maps to 1–142; it reads MNKQVEIFTD…CDELARQAAE (142 aa). Aspartate 10, glutamate 48, aspartate 70, and aspartate 134 together coordinate Mg(2+). The segment at 135–156 is disordered; it reads ELARQAAENPTEDDIGYQPEPQ.

It belongs to the RNase H family. In terms of assembly, monomer. It depends on Mg(2+) as a cofactor.

It is found in the cytoplasm. It catalyses the reaction Endonucleolytic cleavage to 5'-phosphomonoester.. Functionally, endonuclease that specifically degrades the RNA of RNA-DNA hybrids. The polypeptide is Ribonuclease H (Vibrio cholerae serotype O1 (strain M66-2)).